Reading from the N-terminus, the 301-residue chain is Homoserine kinase (301 aa).

Position 81 to 91 (81 to 91 (RPSSGLGSSAA)) interacts with ATP.

The protein belongs to the GHMP kinase family. Homoserine kinase subfamily.

Its subcellular location is the cytoplasm. The enzyme catalyses L-homoserine + ATP = O-phospho-L-homoserine + ADP + H(+). The protein operates within amino-acid biosynthesis; L-threonine biosynthesis; L-threonine from L-aspartate: step 4/5. Catalyzes the ATP-dependent phosphorylation of L-homoserine to L-homoserine phosphate. The sequence is that of Homoserine kinase from Halobacterium salinarum (strain ATCC 29341 / DSM 671 / R1).